Consider the following 343-residue polypeptide: NAD-dependent deacetylase sir2E (343 aa).

The Deacetylase sirtuin-type domain maps to 27-300 (YLKNKKEFEF…PLLERQLLYE (274 aa)). H152 functions as the Proton acceptor in the catalytic mechanism. Zn(2+) contacts are provided by C160, C165, C200, and C203.

This sequence belongs to the sirtuin family.

The protein localises to the nucleus. It catalyses the reaction N(6)-acetyl-L-lysyl-[protein] + NAD(+) + H2O = 2''-O-acetyl-ADP-D-ribose + nicotinamide + L-lysyl-[protein]. Functionally, NAD-dependent deacetylase, which plays an important role in the regulation of transcriptional repression. May play a role in cell cycle. When overexpressed, the cell cycle is accelerated. In Dictyostelium discoideum (Social amoeba), this protein is NAD-dependent deacetylase sir2E (sir2E).